A 194-amino-acid chain; its full sequence is Holliday junction branch migration complex subunit RuvA (194 aa).

The domain I stretch occupies residues 1–64 (MISRLTGKLV…EDAHLLFGFA (64 aa)). The tract at residues 65–143 (TAEERKTFRQ…AHTVTDGLFA (79 aa)) is domain II. Residues 144 to 147 (ASPA) form a flexible linker region. Positions 147–194 (AADETEDIVSTLLALGYNEREAKAAVKGVPKGTDVGEGVRLALKNLLK) are domain III.

Belongs to the RuvA family. As to quaternary structure, homotetramer. Forms an RuvA(8)-RuvB(12)-Holliday junction (HJ) complex. HJ DNA is sandwiched between 2 RuvA tetramers; dsDNA enters through RuvA and exits via RuvB. An RuvB hexamer assembles on each DNA strand where it exits the tetramer. Each RuvB hexamer is contacted by two RuvA subunits (via domain III) on 2 adjacent RuvB subunits; this complex drives branch migration. In the full resolvosome a probable DNA-RuvA(4)-RuvB(12)-RuvC(2) complex forms which resolves the HJ.

The protein resides in the cytoplasm. The RuvA-RuvB-RuvC complex processes Holliday junction (HJ) DNA during genetic recombination and DNA repair, while the RuvA-RuvB complex plays an important role in the rescue of blocked DNA replication forks via replication fork reversal (RFR). RuvA specifically binds to HJ cruciform DNA, conferring on it an open structure. The RuvB hexamer acts as an ATP-dependent pump, pulling dsDNA into and through the RuvAB complex. HJ branch migration allows RuvC to scan DNA until it finds its consensus sequence, where it cleaves and resolves the cruciform DNA. This is Holliday junction branch migration complex subunit RuvA from Neisseria gonorrhoeae (strain ATCC 700825 / FA 1090).